The sequence spans 296 residues: Non-selective voltage-gated ion channel VDAC2 (296 aa).

Lys-25 serves as a coordination point for ATP. Lys-25 participates in a covalent cross-link: Glycyl lysine isopeptide (Lys-Gly) (interchain with G-Cter in ubiquitin). Ser-26 is modified (phosphoserine). Residue Lys-33 coordinates ATP. Lys-33 is subject to N6-acetyllysine; alternate. Residue Lys-33 is modified to N6-succinyllysine; alternate. Residue Lys-33 forms a Glycyl lysine isopeptide (Lys-Gly) (interchain with G-Cter in ubiquitin); alternate linkage. Transmembrane regions (beta stranded) follow at residues 39 to 48 and 52 to 60; these read LVKLDVKTKS and VEFTTSGSS. Residues Lys-66 and Lys-74 each participate in a glycyl lysine isopeptide (Lys-Gly) (interchain with G-Cter in ubiquitin) cross-link. A beta stranded membrane pass occupies residues 67–77; sequence VNGSLETKYKW. A Phosphotyrosine modification is found at Tyr-80. 3 beta stranded membrane passes run 82-89, 93-102, and 108-117; these read LTFTEKWN, TLGTEIAIED, and LKLTFDTTFS. Phosphothreonine is present on Thr-120. Lys-122 is modified (N6-acetyllysine; alternate). Residue Lys-122 forms a Glycyl lysine isopeptide (Lys-Gly) (interchain with G-Cter in ubiquitin); alternate linkage. Lys-123 is covalently cross-linked (Glycyl lysine isopeptide (Lys-Gly) (interchain with G-Cter in ubiquitin)). The next 4 beta stranded transmembrane spans lie at 124-133, 136-143, 150-158, and 163-171; these read SGKIKSAYKR, LNLGCDVD, AIHGSAVFG, and LAGYQMTFD. A Glycyl lysine isopeptide (Lys-Gly) (interchain with G-Cter in ubiquitin) cross-link involves residue Lys-174. A run of 6 beta stranded transmembrane segments spans residues 176-188, 191-198, 202-211, 215-224, 231-240, and 244-251; these read KLTR…GYKT, FQLHTNVN, EFGGSIYQKV, LETAVNLAWT, RFGIAAKYKL, and ASISAKVN. Ser-206 carries the phosphoserine modification. The residue at position 253 (Ser-253) is a Phosphoserine. Residues 255 to 257 and 273 to 277 each bind NAD(+); these read LVG and SALID. The next 2 membrane-spanning stretches (beta stranded) occupy residues 255–264 and 267–276; these read LVGVGYTQTL and GVKLTLSALI. N6-acetyllysine; alternate is present on Lys-279. A Glycyl lysine isopeptide (Lys-Gly) (interchain with G-Cter in ubiquitin); alternate cross-link involves residue Lys-279. Residues 286–295 traverse the membrane as a beta stranded segment; that stretch reads HKLGLGLELE. Lys-287 is covalently cross-linked (Glycyl lysine isopeptide (Lys-Gly) (interchain with G-Cter in ubiquitin)).

It belongs to the eukaryotic mitochondrial porin family. Monomer, homodimer and higher order oligomers; formation of higher order structures is necessary for scramblase activity. In terms of processing, ubiquitinated by PRKN during mitophagy, leading to its degradation and enhancement of mitophagy. Deubiquitinated by USP30.

It is found in the mitochondrion outer membrane. The protein localises to the membrane. It carries out the reaction chloride(in) = chloride(out). The catalysed reaction is K(+)(in) = K(+)(out). It catalyses the reaction a 1,2-diacyl-sn-glycero-3-phospho-L-serine(in) = a 1,2-diacyl-sn-glycero-3-phospho-L-serine(out). The enzyme catalyses a 1,2-diacyl-sn-glycero-3-phosphocholine(in) = a 1,2-diacyl-sn-glycero-3-phosphocholine(out). It carries out the reaction a 1,2-diacyl-sn-glycero-3-phospho-(1D-myo-inositol)(in) = a 1,2-diacyl-sn-glycero-3-phospho-(1D-myo-inositol)(out). Functionally, non-selective voltage-gated ion channel that mediates the transport of anions and cations through the mitochondrion outer membrane and plasma membrane. The channel adopts an open conformation at zero mV and a closed conformation at both positive and negative potentials. There are two populations of channels; the main that functions in a lower open-state conductance with lower ion selectivity, that switch, in a voltage-dependent manner, from the open to a low-conducting 'closed' state and the other that has a normal ion selectivity in the typical high conductance, 'open' state. Binds various lipids, including the sphingolipid ceramide, the phospholipid phosphatidylcholine, and the sterols cholesterol and oxysterol. Binding of ceramide promotes the mitochondrial outer membrane permeabilization (MOMP) apoptotic pathway. Catalyzes the scrambling of phospholipids across the outer mitochondrial membrane; the mechanism is unrelated to channel activity and is capable of translocating both anionic and zwitterionic phospholipids. The protein is Non-selective voltage-gated ion channel VDAC2 of Meleagris gallopavo (Wild turkey).